Here is a 105-residue protein sequence, read N- to C-terminus: Large ribosomal subunit protein eL36 (105 aa).

The protein belongs to the eukaryotic ribosomal protein eL36 family. Component of the large ribosomal subunit.

It is found in the cytoplasm. It localises to the cytosol. Component of the large ribosomal subunit. The ribosome is a large ribonucleoprotein complex responsible for the synthesis of proteins in the cell. This chain is Large ribosomal subunit protein eL36 (rpl36), found in Danio rerio (Zebrafish).